We begin with the raw amino-acid sequence, 517 residues long: Protein disulfide isomerase-like 1-2 (517 aa).

The signal sequence occupies residues 1-23 (MAVNLVLSFALAILISSSPTAVG). A Thioredoxin 1 domain is found at 24–143 (VDATEELKEA…IVEYLKRQVG (120 aa)). Asn41 carries N-linked (GlcNAc...) asparagine glycosylation. Active-site nucleophile residues include Cys61 and Cys64. A disulfide bridge connects residues Cys61 and Cys64. N-linked (GlcNAc...) asparagine glycosylation occurs at Asn301. One can recognise a Thioredoxin 2 domain in the interval 357–484 (VEYGNLTPYV…IISFINENRG (128 aa)). Catalysis depends on nucleophile residues Cys407 and Cys410. A disulfide bridge links Cys407 with Cys410. The short motif at 514–517 (KDEL) is the Prevents secretion from ER element.

It belongs to the protein disulfide isomerase family.

The protein resides in the endoplasmic reticulum lumen. The enzyme catalyses Catalyzes the rearrangement of -S-S- bonds in proteins.. Its function is as follows. Acts as a protein-folding catalyst that interacts with nascent polypeptides to catalyze the formation, isomerization, and reduction or oxidation of disulfide bonds. May play a role in storage protein biogenesis. This chain is Protein disulfide isomerase-like 1-2 (PDIL1-2), found in Oryza sativa subsp. japonica (Rice).